We begin with the raw amino-acid sequence, 278 residues long: Hydroxyethylthiazole kinase (278 aa).

Position 49 (Met-49) interacts with substrate. Residues Asn-125 and Ser-171 each contribute to the ATP site. A substrate-binding site is contributed by Gly-198.

Belongs to the Thz kinase family. Requires Mg(2+) as cofactor.

The enzyme catalyses 5-(2-hydroxyethyl)-4-methylthiazole + ATP = 4-methyl-5-(2-phosphooxyethyl)-thiazole + ADP + H(+). Its pathway is cofactor biosynthesis; thiamine diphosphate biosynthesis; 4-methyl-5-(2-phosphoethyl)-thiazole from 5-(2-hydroxyethyl)-4-methylthiazole: step 1/1. Its function is as follows. Catalyzes the phosphorylation of the hydroxyl group of 4-methyl-5-beta-hydroxyethylthiazole (THZ). This Natronomonas pharaonis (strain ATCC 35678 / DSM 2160 / CIP 103997 / JCM 8858 / NBRC 14720 / NCIMB 2260 / Gabara) (Halobacterium pharaonis) protein is Hydroxyethylthiazole kinase.